Consider the following 51-residue polypeptide: rpoE leader peptide (51 aa).

In terms of biological role, a short protein whose stop codon overlaps with the start codon of downstream rpoE; a premature stop codon at position 12 results in decreased expression of ECF sigma factor RpoE, thus they are translationally coupled. In Escherichia coli (strain K12), this protein is rpoE leader peptide.